A 305-amino-acid polypeptide reads, in one-letter code: Protein-methionine-sulfoxide reductase catalytic subunit MsrP (305 aa).

The tat-type signal signal peptide spans 1-54 (MLIRKPADHLPSEITSESVYFNRRQFMAGAAGLLLSAETLAGLAAKKSPLSQLA). Mo-molybdopterin contacts are provided by residues Asn-69, 72–73 (YE), Cys-126, Thr-161, Asn-209, Arg-214, and 225–227 (SIK).

Belongs to the MsrP family. In terms of assembly, heterodimer of a catalytic subunit (MsrP) and a heme-binding subunit (MsrQ). The cofactor is Mo-molybdopterin. Predicted to be exported by the Tat system. The position of the signal peptide cleavage has not been experimentally proven.

The protein localises to the periplasm. The enzyme catalyses L-methionyl-[protein] + a quinone + H2O = L-methionyl-(S)-S-oxide-[protein] + a quinol. It carries out the reaction L-methionyl-[protein] + a quinone + H2O = L-methionyl-(R)-S-oxide-[protein] + a quinol. In terms of biological role, part of the MsrPQ system that repairs oxidized periplasmic proteins containing methionine sulfoxide residues (Met-O), using respiratory chain electrons. Thus protects these proteins from oxidative-stress damage caused by reactive species of oxygen and chlorine generated by the host defense mechanisms. MsrPQ is essential for the maintenance of envelope integrity under bleach stress, rescuing a wide series of structurally unrelated periplasmic proteins from methionine oxidation. The catalytic subunit MsrP is non-stereospecific, being able to reduce both (R-) and (S-) diastereoisomers of methionine sulfoxide. The protein is Protein-methionine-sulfoxide reductase catalytic subunit MsrP of Chromobacterium violaceum (strain ATCC 12472 / DSM 30191 / JCM 1249 / CCUG 213 / NBRC 12614 / NCIMB 9131 / NCTC 9757 / MK).